The sequence spans 282 residues: Polyamine aminopropyltransferase (282 aa).

Residues 11–239 (IEWYPRGYGV…SPWSFLVGVK (229 aa)) enclose the PABS domain. Residue Gln-36 coordinates S-methyl-5'-thioadenosine. Spermidine is bound by residues His-67 and Asp-91. Residues Glu-111 and 142–143 (DG) each bind S-methyl-5'-thioadenosine. Asp-160 serves as the catalytic Proton acceptor. Residue 160-163 (DSTD) participates in spermidine binding. Residue Pro-167 coordinates S-methyl-5'-thioadenosine.

This sequence belongs to the spermidine/spermine synthase family. In terms of assembly, homodimer or homotetramer.

Its subcellular location is the cytoplasm. The enzyme catalyses S-adenosyl 3-(methylsulfanyl)propylamine + putrescine = S-methyl-5'-thioadenosine + spermidine + H(+). Its pathway is amine and polyamine biosynthesis; spermidine biosynthesis; spermidine from putrescine: step 1/1. Functionally, catalyzes the irreversible transfer of a propylamine group from the amino donor S-adenosylmethioninamine (decarboxy-AdoMet) to putrescine (1,4-diaminobutane) to yield spermidine. In Thermococcus onnurineus (strain NA1), this protein is Polyamine aminopropyltransferase.